The following is a 172-amino-acid chain: Putative B3 domain-containing protein At1g05615 (172 aa).

Positions 69–169 (VDEGKIIDFE…NLAMVPLTPT (101 aa)) form a DNA-binding region, TF-B3.

Its subcellular location is the nucleus. This is Putative B3 domain-containing protein At1g05615 from Arabidopsis thaliana (Mouse-ear cress).